The primary structure comprises 382 residues: ATP phosphoribosyltransferase regulatory subunit (382 aa).

The protein belongs to the class-II aminoacyl-tRNA synthetase family. HisZ subfamily. As to quaternary structure, heteromultimer composed of HisG and HisZ subunits.

The protein resides in the cytoplasm. It functions in the pathway amino-acid biosynthesis; L-histidine biosynthesis; L-histidine from 5-phospho-alpha-D-ribose 1-diphosphate: step 1/9. Its function is as follows. Required for the first step of histidine biosynthesis. May allow the feedback regulation of ATP phosphoribosyltransferase activity by histidine. The protein is ATP phosphoribosyltransferase regulatory subunit of Acidovorax sp. (strain JS42).